We begin with the raw amino-acid sequence, 481 residues long: tRNA:m(4)X modification enzyme TRM13 homolog (481 aa).

Alanine 2 is subject to N-acetylalanine. The segment at 56 to 83 adopts a CHHC U11-48K-type zinc-finger fold; the sequence is RILCPLDPKHTVYEDQLAKHLKKCNSRE. Zn(2+)-binding residues include cysteine 59, histidine 65, histidine 75, and cysteine 79. Positions 113–140 form a coiled coil; the sequence is SLSEEQLEKLIKKLRKASEGLNSTLKDH. The interval 381–408 is disordered; that stretch reads ETSNSTTKRQDNQNDDSEEHDDGGYRIT.

This sequence belongs to the methyltransferase TRM13 family.

It carries out the reaction cytidine(4) in tRNA(Pro) + S-adenosyl-L-methionine = 2'-O-methylcytidine(4) in tRNA(Pro) + S-adenosyl-L-homocysteine + H(+). It catalyses the reaction cytidine(4) in tRNA(Gly)(GCC) + S-adenosyl-L-methionine = 2'-O-methylcytidine(4) in tRNA(Gly)(GCC) + S-adenosyl-L-homocysteine + H(+). The enzyme catalyses adenosine(4) in tRNA(His) + S-adenosyl-L-methionine = 2'-O-methyladenosine(4) in tRNA(His) + S-adenosyl-L-homocysteine + H(+). In terms of biological role, tRNA methylase which 2'-O-methylates cytidine(4) in tRNA(Pro) and tRNA(Gly)(GCC), and adenosine(4) in tRNA(His). This chain is tRNA:m(4)X modification enzyme TRM13 homolog (TRMT13), found in Homo sapiens (Human).